A 245-amino-acid polypeptide reads, in one-letter code: Acetylglutamate kinase (245 aa).

Substrate-binding positions include 41–42 (GG), Arg-63, and Asn-156.

The protein belongs to the acetylglutamate kinase family. ArgB subfamily.

The protein resides in the cytoplasm. The enzyme catalyses N-acetyl-L-glutamate + ATP = N-acetyl-L-glutamyl 5-phosphate + ADP. It functions in the pathway amino-acid biosynthesis; L-arginine biosynthesis; N(2)-acetyl-L-ornithine from L-glutamate: step 2/4. Its function is as follows. Catalyzes the ATP-dependent phosphorylation of N-acetyl-L-glutamate. The chain is Acetylglutamate kinase from Staphylococcus epidermidis (strain ATCC 35984 / DSM 28319 / BCRC 17069 / CCUG 31568 / BM 3577 / RP62A).